Here is a 296-residue protein sequence, read N- to C-terminus: 4-hydroxy-tetrahydrodipicolinate synthase (296 aa).

Thr49 is a binding site for pyruvate. Residue Tyr137 is the Proton donor/acceptor of the active site. The active-site Schiff-base intermediate with substrate is the Lys166. A pyruvate-binding site is contributed by Ile208.

This sequence belongs to the DapA family. Homotetramer; dimer of dimers.

The protein localises to the cytoplasm. The enzyme catalyses L-aspartate 4-semialdehyde + pyruvate = (2S,4S)-4-hydroxy-2,3,4,5-tetrahydrodipicolinate + H2O + H(+). The protein operates within amino-acid biosynthesis; L-lysine biosynthesis via DAP pathway; (S)-tetrahydrodipicolinate from L-aspartate: step 3/4. Functionally, catalyzes the condensation of (S)-aspartate-beta-semialdehyde [(S)-ASA] and pyruvate to 4-hydroxy-tetrahydrodipicolinate (HTPA). The polypeptide is 4-hydroxy-tetrahydrodipicolinate synthase (Chlorobaculum parvum (strain DSM 263 / NCIMB 8327) (Chlorobium vibrioforme subsp. thiosulfatophilum)).